Consider the following 202-residue polypeptide: Endothelin-1 (202 aa).

An N-terminal signal peptide occupies residues M1–G25. The propeptide occupies T26 to S50. The tract at residues S29–R48 is disordered. 2 cysteine pairs are disulfide-bonded: C53–C67 and C55–C63. The propeptide occupies V74–H202. The endothelin-like stretch occupies residues C110–C124.

The protein belongs to the endothelin/sarafotoxin family.

Its subcellular location is the secreted. Endothelins are endothelium-derived vasoconstrictor peptides. Probable ligand for G-protein coupled receptors EDNRA and EDNRB which activates PTK2B, BCAR1, BCAR3 and, GTPases RAP1 and RHOA cascade in glomerular mesangial cells. Also binds the DEAR/FBXW7-AS1 receptor. Promotes mesenteric arterial wall remodeling via activation of ROCK signaling and subsequent colocalization of NFATC3 with F-actin filaments. NFATC3 then translocates to the nucleus where it subsequently promotes the transcription of the smooth muscle hypertrophy and differentiation marker ACTA2. This is Endothelin-1 (EDN1) from Ovis aries (Sheep).